A 151-amino-acid chain; its full sequence is Ubiquitin-conjugating enzyme E2-17 kDa (151 aa).

The UBC core domain maps to 4–150; sequence PARRRLMRDF…VKACVEQSFI (147 aa). Cys88 functions as the Glycyl thioester intermediate in the catalytic mechanism.

It belongs to the ubiquitin-conjugating enzyme family.

Its subcellular location is the nucleus. It carries out the reaction S-ubiquitinyl-[E1 ubiquitin-activating enzyme]-L-cysteine + [E2 ubiquitin-conjugating enzyme]-L-cysteine = [E1 ubiquitin-activating enzyme]-L-cysteine + S-ubiquitinyl-[E2 ubiquitin-conjugating enzyme]-L-cysteine.. Its pathway is protein modification; protein ubiquitination. In terms of biological role, E2 ubiquitin-conjugating enzyme that accepts ubiquitin from the ubiquitin-activating enzyme E1 and transfers it to a E3 ubiquitin-protein ligase. Required for postreplication repair of UV-damaged DNA. Involved in the negative regulation of the Ras/MAPK signaling pathway in the wing by acting with the putative E3 ligases poe, Kcmf1 and Ufd4 to mediate the ubiquitination and proteasomal degradation of rl/MAPK. Required for in mitophagy. The polypeptide is Ubiquitin-conjugating enzyme E2-17 kDa (Drosophila melanogaster (Fruit fly)).